A 555-amino-acid polypeptide reads, in one-letter code: MSEAEARPTNFIRQIIDEDLASGKHTTVHTRFPPEPNGYLHIGHAKSICLNFGIAQDYQGQCNLRFDDTNPVKEDIEYVDSIKNDVEWLGFHWSGDIRYSSDYFDQLHAYAVELINKGLAYVDELTPEQIREYRGTLTAPGKNSPFRDRSVEENLALFEKMRTGGFEEGKACLRAKIDMASPFIVMRDPVLYRIKFAEHHQTGNKWCIYPMYDFTHCISDALEGITHSLCTLEFQDNRRLYDWVLDNITIPVHPRQYEFSRLNLEYTVMSKRKLNLLVTDKHVEGWDDPRMPTISGLRRRGYTAASIREFCKRIGVTKQDNTIEMASLESCIREDLNENAPRAMAVIDPVKLVIENYPQGESEMVTMPNHPNKPEMGSREVPFSGEIWIDRADFREEANKQYKRLVMGKEVRLRNAYVIKAERVEKDAEGNITTIFCTYDADTLSKDPADGRKVKGVIHWVSAAHALPIEIRLYDRLFSVPNPGAAEDFLSVINPESLVIKQGYGEPSLKAAVAGKAFQFEREGYFCLDSRYATADKLVFNRTVGLRDTWAKAGE.

The short motif at 34–44 is the 'HIGH' region element; the sequence is PEPNGYLHIGH. ATP is bound by residues 35-37 and 41-47; these read EPN and HIGHAKS. 2 residues coordinate L-glutamine: aspartate 67 and tyrosine 212. Residues threonine 231, 261-262, and 269-271 each bind ATP; these read RL and MSK. The short motif at 268 to 272 is the 'KMSKS' region element; it reads VMSKR. The segment at 317-324 is interaction with tRNA; the sequence is TKQDNTIE.

This sequence belongs to the class-I aminoacyl-tRNA synthetase family. Monomer.

It is found in the cytoplasm. It catalyses the reaction tRNA(Gln) + L-glutamine + ATP = L-glutaminyl-tRNA(Gln) + AMP + diphosphate. The sequence is that of Glutamine--tRNA ligase from Salmonella agona (strain SL483).